The chain runs to 508 residues: Histone acetyltransferase type B catalytic subunit (508 aa).

Interaction with histone H4 N-terminus stretches follow at residues 44–46 (EKE) and 207–209 (YRY). Residues 249–251 (FII) and 256–262 (QQKGLGS) each bind acetyl-CoA. Catalysis depends on E284, which acts as the Proton donor/acceptor. Disordered stretches follow at residues 364-399 (SVRP…PTPE) and 461-508 (QADG…SGHA). Residues 387–399 (KGHEKALPKPTPE) show a composition bias toward basic and acidic residues.

Belongs to the HAT1 family. As to quaternary structure, component of the HAT-B complex composed of at least hat-1 and hat-2. The HAT-B complex binds to histone H4 tail.

The protein localises to the cytoplasm. Its subcellular location is the nucleus. The enzyme catalyses L-lysyl-[protein] + acetyl-CoA = N(6)-acetyl-L-lysyl-[protein] + CoA + H(+). Functionally, catalytic component of the histone acetylase B (HAT-B) complex. Acetylates 'Lys-12' of histone H4 which is required for telomeric silencing. Has intrinsic substrate specificity that modifies lysine in recognition sequence GXGKXG. Involved in DNA double-strand break repair. In Neurospora crassa (strain ATCC 24698 / 74-OR23-1A / CBS 708.71 / DSM 1257 / FGSC 987), this protein is Histone acetyltransferase type B catalytic subunit (hat-1).